Consider the following 1012-residue polypeptide: Structural polyprotein (1012 aa).

A divalent metal cation is bound at residue Asp-30. One can recognise a Peptidase S50 domain in the interval 513–755; sequence ADKGYEVVAN…AGRQYHLAMA (243 aa). The Nucleophile role is filled by Ser-652. Residue Lys-692 is part of the active site. The segment at 970–1012 is disordered; that stretch reads MEMKHRNPRRAPPKPKPKPNAPSQRPPGRLGRWIRTVSDEDLE. Basic residues predominate over residues 975 to 986; the sequence is RNPRRAPPKPKP. An interaction with VP1 protein region spans residues 1003 to 1012; the sequence is IRTVSDEDLE.

Homotrimer. A central divalent metal stabilizes the VP2 trimer. Interacts with host ITGA4/ITGB1. As to quaternary structure, homodimer. Interacts (via C-terminus) with VP1 in the cytoplasm. Interacts with VP2. Specific enzymatic cleavages yield mature proteins. The capsid assembly seems to be regulated by polyprotein processing. The protease VP4 cleaves itself off the polyprotein, thus releasing pre-VP2 and VP3 within the infected cell. During capsid assembly, the C-terminus of pre-VP2 is further processed by VP4, giving rise to VP2, the external capsid protein and three small peptides that all stay closely associated with the capsid.

The protein localises to the virion. It is found in the host cytoplasm. In terms of biological role, capsid protein VP2 self assembles to form an icosahedral capsid with a T=13 symmetry, about 70 nm in diameter, and consisting of 260 VP2 trimers. The capsid encapsulates the genomic dsRNA. VP2 is also involved in attachment and entry into the host cell by interacting with host ITGA4/ITGB1. The precursor of VP2 plays an important role in capsid assembly. First, pre-VP2 and VP2 oligomers assemble to form a procapsid. Then, the pre-VP2 intermediates may be processed into VP2 proteins by proteolytic cleavage mediated by VP4 to obtain the mature virion. The final capsid is composed of pentamers and hexamers but VP2 has a natural tendency to assemble into all-pentameric structures. Therefore pre-VP2 may be required to allow formation of the hexameric structures. Functionally, protease VP4 is a serine protease that cleaves the polyprotein into its final products. Pre-VP2 is first partially cleaved, and may be completely processed by VP4 upon capsid maturation. Its function is as follows. Capsid protein VP3 plays a key role in virion assembly by providing a scaffold for the capsid made of VP2. May self-assemble to form a T=4-like icosahedral inner-capsid composed of at least 180 trimers. Plays a role in genomic RNA packaging by recruiting VP1 into the capsid and interacting with the dsRNA genome segments to form a ribonucleoprotein complex. Additionally, the interaction of the VP3 C-terminal tail with VP1 removes the inherent structural blockade of the polymerase active site. Thus, VP3 can also function as a transcriptional activator. In terms of biological role, structural peptide 1 is a small peptide derived from pre-VP2 C-terminus. It destabilizes and perforates cell membranes, suggesting a role during entry. Structural peptide 2 is a small peptide derived from pVP2 C-terminus. It is not essential for the virus viability, but viral growth is affected when missing. Functionally, structural peptide 3 is a small peptide derived from pVP2 C-terminus. It is not essential for the virus viability, but viral growth is affected when missing. Its function is as follows. Structural peptide 4 is a small peptide derived from pVP2 C-terminus. It is essential for the virus viability. This is Structural polyprotein from Avian infectious bursal disease virus (strain Australian 002-73) (IBDV).